The following is a 282-amino-acid chain: 2-dehydro-3-deoxyphosphooctonate aldolase (282 aa).

Belongs to the KdsA family.

It is found in the cytoplasm. The catalysed reaction is D-arabinose 5-phosphate + phosphoenolpyruvate + H2O = 3-deoxy-alpha-D-manno-2-octulosonate-8-phosphate + phosphate. The protein operates within carbohydrate biosynthesis; 3-deoxy-D-manno-octulosonate biosynthesis; 3-deoxy-D-manno-octulosonate from D-ribulose 5-phosphate: step 2/3. It functions in the pathway bacterial outer membrane biogenesis; lipopolysaccharide biosynthesis. The chain is 2-dehydro-3-deoxyphosphooctonate aldolase from Shewanella sp. (strain W3-18-1).